The following is a 79-amino-acid chain: D-alanyl carrier protein (79 aa).

One can recognise a Carrier domain in the interval 2 to 79 (AEFKEQVLDI…MVIKKLEEIR (78 aa)). Ser37 bears the O-(pantetheine 4'-phosphoryl)serine mark.

It belongs to the DltC family. Post-translationally, 4'-phosphopantetheine is transferred from CoA to a specific serine of apo-DCP.

The protein resides in the cytoplasm. The protein operates within cell wall biogenesis; lipoteichoic acid biosynthesis. In terms of biological role, carrier protein involved in the D-alanylation of lipoteichoic acid (LTA). The loading of thioester-linked D-alanine onto DltC is catalyzed by D-alanine--D-alanyl carrier protein ligase DltA. The DltC-carried D-alanyl group is further transferred to cell membrane phosphatidylglycerol (PG) by forming an ester bond, probably catalyzed by DltD. D-alanylation of LTA plays an important role in modulating the properties of the cell wall in Gram-positive bacteria, influencing the net charge of the cell wall. This is D-alanyl carrier protein from Bacillus anthracis (strain CDC 684 / NRRL 3495).